The following is a 214-amino-acid chain: Thymidylate kinase (214 aa).

Position 15-22 (15-22 (GLEGAGKT)) interacts with ATP.

The protein belongs to the thymidylate kinase family.

The catalysed reaction is dTMP + ATP = dTDP + ADP. Phosphorylation of dTMP to form dTDP in both de novo and salvage pathways of dTTP synthesis. This is Thymidylate kinase from Haemophilus ducreyi (strain 35000HP / ATCC 700724).